The following is a 251-amino-acid chain: Ditrans,polycis-undecaprenyl-diphosphate synthase ((2E,6E)-farnesyl-diphosphate specific) (251 aa).

Residue Asp-20 is part of the active site. Asp-20 serves as a coordination point for Mg(2+). Substrate is bound by residues 21–24 (GNGR), Trp-25, Arg-33, His-37, and 65–67 (SSE). Residue Asn-68 is the Proton acceptor of the active site. Substrate contacts are provided by residues Trp-69, Arg-71, Arg-188, and 194-196 (RIS). Glu-207 serves as a coordination point for Mg(2+).

This sequence belongs to the UPP synthase family. Homodimer. The cofactor is Mg(2+).

It catalyses the reaction 8 isopentenyl diphosphate + (2E,6E)-farnesyl diphosphate = di-trans,octa-cis-undecaprenyl diphosphate + 8 diphosphate. Functionally, catalyzes the sequential condensation of isopentenyl diphosphate (IPP) with (2E,6E)-farnesyl diphosphate (E,E-FPP) to yield (2Z,6Z,10Z,14Z,18Z,22Z,26Z,30Z,34E,38E)-undecaprenyl diphosphate (di-trans,octa-cis-UPP). UPP is the precursor of glycosyl carrier lipid in the biosynthesis of bacterial cell wall polysaccharide components such as peptidoglycan and lipopolysaccharide. This Vibrio parahaemolyticus serotype O3:K6 (strain RIMD 2210633) protein is Ditrans,polycis-undecaprenyl-diphosphate synthase ((2E,6E)-farnesyl-diphosphate specific).